Consider the following 558-residue polypeptide: Dihydroxy-acid dehydratase (558 aa).

A Mg(2+)-binding site is contributed by D81. C122 is a binding site for [2Fe-2S] cluster. D123 and K124 together coordinate Mg(2+). N6-carboxylysine is present on K124. C195 lines the [2Fe-2S] cluster pocket. E447 provides a ligand contact to Mg(2+). Residue S473 is the Proton acceptor of the active site.

Belongs to the IlvD/Edd family. In terms of assembly, homodimer. Requires [2Fe-2S] cluster as cofactor. The cofactor is Mg(2+).

The catalysed reaction is (2R)-2,3-dihydroxy-3-methylbutanoate = 3-methyl-2-oxobutanoate + H2O. The enzyme catalyses (2R,3R)-2,3-dihydroxy-3-methylpentanoate = (S)-3-methyl-2-oxopentanoate + H2O. It participates in amino-acid biosynthesis; L-isoleucine biosynthesis; L-isoleucine from 2-oxobutanoate: step 3/4. Its pathway is amino-acid biosynthesis; L-valine biosynthesis; L-valine from pyruvate: step 3/4. In terms of biological role, functions in the biosynthesis of branched-chain amino acids. Catalyzes the dehydration of (2R,3R)-2,3-dihydroxy-3-methylpentanoate (2,3-dihydroxy-3-methylvalerate) into 2-oxo-3-methylpentanoate (2-oxo-3-methylvalerate) and of (2R)-2,3-dihydroxy-3-methylbutanoate (2,3-dihydroxyisovalerate) into 2-oxo-3-methylbutanoate (2-oxoisovalerate), the penultimate precursor to L-isoleucine and L-valine, respectively. This chain is Dihydroxy-acid dehydratase, found in Bacillus subtilis (strain 168).